Reading from the N-terminus, the 139-residue chain is D-ribose pyranase (139 aa).

Histidine 20 serves as the catalytic Proton donor. Substrate contacts are provided by residues aspartate 28, histidine 106, and 128-130 (YAN).

This sequence belongs to the RbsD / FucU family. RbsD subfamily. In terms of assembly, homodecamer.

It localises to the cytoplasm. The enzyme catalyses beta-D-ribopyranose = beta-D-ribofuranose. The protein operates within carbohydrate metabolism; D-ribose degradation; D-ribose 5-phosphate from beta-D-ribopyranose: step 1/2. In terms of biological role, catalyzes the interconversion of beta-pyran and beta-furan forms of D-ribose. In Escherichia coli O127:H6 (strain E2348/69 / EPEC), this protein is D-ribose pyranase.